Consider the following 248-residue polypeptide: MTETARTTIDASEIEHFSRIAAEWWNPQGKFRPLHKFNPTRLAYIKEKICAKFNRDPNAPRPFDGLRLLDIGCGGGLLCEPMARLGATVIGADASTTNIEVAKIHAAQSGLDIDYRATTAEALAEAGEKFDVVLNMEVVEHVADVDLFMSATSEMVKPGGLMFVATINRTLKAYGLAIIGAEYVLRWLPRGTHQYEKLVRPEELEAALAKGGLRLIDKLGVTYNPLADSWSRSRDTDVNYMVLAERPA.

Residues arginine 41, glycine 72, aspartate 93, and methionine 136 each coordinate S-adenosyl-L-methionine.

Belongs to the methyltransferase superfamily. UbiG/COQ3 family.

The catalysed reaction is a 3-demethylubiquinol + S-adenosyl-L-methionine = a ubiquinol + S-adenosyl-L-homocysteine + H(+). It carries out the reaction a 3-(all-trans-polyprenyl)benzene-1,2-diol + S-adenosyl-L-methionine = a 2-methoxy-6-(all-trans-polyprenyl)phenol + S-adenosyl-L-homocysteine + H(+). It functions in the pathway cofactor biosynthesis; ubiquinone biosynthesis. Functionally, O-methyltransferase that catalyzes the 2 O-methylation steps in the ubiquinone biosynthetic pathway. This Brucella anthropi (strain ATCC 49188 / DSM 6882 / CCUG 24695 / JCM 21032 / LMG 3331 / NBRC 15819 / NCTC 12168 / Alc 37) (Ochrobactrum anthropi) protein is Ubiquinone biosynthesis O-methyltransferase.